The following is a 234-amino-acid chain: 7-carboxy-7-deazaguanine synthase (234 aa).

Substrate is bound by residues 36–38 and Arg-51; that span reads IQG. One can recognise a Radical SAM core domain in the interval 42-234; the sequence is FVGYPSIFIR…LQTHKFLGIE (193 aa). 3 residues coordinate [4Fe-4S] cluster: Cys-55, Cys-59, and Cys-62. Residue Thr-64 participates in Mg(2+) binding. Thr-100 serves as a coordination point for substrate. Residues Gly-102, 144-146, and 195-198 each bind S-adenosyl-L-methionine; these read SPK and QSMD.

It belongs to the radical SAM superfamily. 7-carboxy-7-deazaguanine synthase family. Homodimer. Requires [4Fe-4S] cluster as cofactor. It depends on S-adenosyl-L-methionine as a cofactor. The cofactor is Mg(2+).

The catalysed reaction is 6-carboxy-5,6,7,8-tetrahydropterin + H(+) = 7-carboxy-7-deazaguanine + NH4(+). Its pathway is purine metabolism; 7-cyano-7-deazaguanine biosynthesis. Catalyzes the complex heterocyclic radical-mediated conversion of 6-carboxy-5,6,7,8-tetrahydropterin (CPH4) to 7-carboxy-7-deazaguanine (CDG), a step common to the biosynthetic pathways of all 7-deazapurine-containing compounds. This Rickettsia prowazekii (strain Madrid E) protein is 7-carboxy-7-deazaguanine synthase.